Reading from the N-terminus, the 608-residue chain is Phosphomethylpyrimidine synthase (608 aa).

Substrate contacts are provided by residues N216, M245, Y274, H310, 330 to 332 (SRG), 371 to 374 (DGLR), and E410. Zn(2+) is bound at residue H414. Residue Y437 coordinates substrate. A Zn(2+)-binding site is contributed by H478. Residues C558, C561, and C566 each contribute to the [4Fe-4S] cluster site.

It belongs to the ThiC family. Homodimer. [4Fe-4S] cluster is required as a cofactor.

The catalysed reaction is 5-amino-1-(5-phospho-beta-D-ribosyl)imidazole + S-adenosyl-L-methionine = 4-amino-2-methyl-5-(phosphooxymethyl)pyrimidine + CO + 5'-deoxyadenosine + formate + L-methionine + 3 H(+). The protein operates within cofactor biosynthesis; thiamine diphosphate biosynthesis. Its function is as follows. Catalyzes the synthesis of the hydroxymethylpyrimidine phosphate (HMP-P) moiety of thiamine from aminoimidazole ribotide (AIR) in a radical S-adenosyl-L-methionine (SAM)-dependent reaction. This Ruegeria sp. (strain TM1040) (Silicibacter sp.) protein is Phosphomethylpyrimidine synthase.